Here is a 334-residue protein sequence, read N- to C-terminus: Holliday junction branch migration complex subunit RuvB (334 aa).

The tract at residues 1-181 is large ATPase domain (RuvB-L); sequence MHDRLISGTE…FGIVQRLEFY (181 aa). Residues Ile20, Arg21, Gly62, Lys65, Thr66, Thr67, 128–130, Arg171, Tyr181, and Arg218 each bind ATP; that span reads EDY. Thr66 lines the Mg(2+) pocket. A small ATPAse domain (RuvB-S) region spans residues 182 to 252; sequence SVEDLTHIVT…MAQRALDMLN (71 aa). The segment at 255–334 is head domain (RuvB-H); sequence KDGLDTLDRR…FGLTPPEPKN (80 aa). Residues Arg310 and Arg315 each coordinate DNA.

The protein belongs to the RuvB family. As to quaternary structure, homohexamer. Forms an RuvA(8)-RuvB(12)-Holliday junction (HJ) complex. HJ DNA is sandwiched between 2 RuvA tetramers; dsDNA enters through RuvA and exits via RuvB. An RuvB hexamer assembles on each DNA strand where it exits the tetramer. Each RuvB hexamer is contacted by two RuvA subunits (via domain III) on 2 adjacent RuvB subunits; this complex drives branch migration. In the full resolvosome a probable DNA-RuvA(4)-RuvB(12)-RuvC(2) complex forms which resolves the HJ.

It is found in the cytoplasm. The enzyme catalyses ATP + H2O = ADP + phosphate + H(+). In terms of biological role, the RuvA-RuvB-RuvC complex processes Holliday junction (HJ) DNA during genetic recombination and DNA repair, while the RuvA-RuvB complex plays an important role in the rescue of blocked DNA replication forks via replication fork reversal (RFR). RuvA specifically binds to HJ cruciform DNA, conferring on it an open structure. The RuvB hexamer acts as an ATP-dependent pump, pulling dsDNA into and through the RuvAB complex. RuvB forms 2 homohexamers on either side of HJ DNA bound by 1 or 2 RuvA tetramers; 4 subunits per hexamer contact DNA at a time. Coordinated motions by a converter formed by DNA-disengaged RuvB subunits stimulates ATP hydrolysis and nucleotide exchange. Immobilization of the converter enables RuvB to convert the ATP-contained energy into a lever motion, pulling 2 nucleotides of DNA out of the RuvA tetramer per ATP hydrolyzed, thus driving DNA branch migration. The RuvB motors rotate together with the DNA substrate, which together with the progressing nucleotide cycle form the mechanistic basis for DNA recombination by continuous HJ branch migration. Branch migration allows RuvC to scan DNA until it finds its consensus sequence, where it cleaves and resolves cruciform DNA. The chain is Holliday junction branch migration complex subunit RuvB from Acinetobacter baylyi (strain ATCC 33305 / BD413 / ADP1).